We begin with the raw amino-acid sequence, 280 residues long: UPF0273 protein SSO1861 (280 aa).

The 245-residue stretch at 2-246 (KRVKTYIPGL…YLKISNWSVS (245 aa)) folds into the KaiC domain. An ATP-binding site is contributed by 29–36 (GGPGTGKS).

Belongs to the UPF0273 family.

The chain is UPF0273 protein SSO1861 from Saccharolobus solfataricus (strain ATCC 35092 / DSM 1617 / JCM 11322 / P2) (Sulfolobus solfataricus).